The sequence spans 414 residues: Serine/arginine-rich splicing factor SR45 (414 aa).

2 disordered regions span residues 1–95 and 175–414; these read MAKP…KAVQ and LPPR…PRKT. Low complexity-rich tracts occupy residues 10-34 and 42-60; these read SPSV…SRSI and RSLS…GSRS. A Nuclear localization signal 1 motif is present at residues 62–69; sequence PRRGKSPA. S77 carries the post-translational modification Phosphoserine. In terms of domain architecture, RRM spans 98–176; sequence LVLHVDSLSR…KVVKATFTLP (79 aa). Over residues 176 to 191 the composition is skewed to low complexity; sequence PPRQKVSSPPKPVSAA. The span at 205–220 shows a compositional bias: basic and acidic residues; the sequence is DAEKDGGPRRPRETSP. The required for isoform 1 function in petal development stretch occupies residues 218–219; the sequence is TS. Residues 228–243 are compositionally biased toward basic residues; that stretch reads PRRRSPLPRRGLSPRR. The Nuclear localization signal 2 signature appears at 229–236; that stretch reads RRRSPLPR. Phosphoserine is present on S256. 3 short sequence motifs (nuclear localization signal) span residues 284–291, 318–325, and 338–345; these read PRRYRSPP, PRRLRSPP, and IRRPGRSR. Composition is skewed to basic residues over residues 285–343 and 352–363; these read RRYR…RPGR and RKGRGPAGRRGR. Over residues 364–373 the composition is skewed to low complexity; it reads SSSYSSSPSP. The Nuclear localization signal 6 motif lies at 373–380; the sequence is PRRIPRKI. The segment covering 375 to 394 has biased composition (basic residues); that stretch reads RIPRKISRSRSPKRPLRGKR. Residues 404–414 show a composition bias toward pro residues; sequence SPPPPPPPRKT.

This sequence belongs to the splicing factor SR family. SR45 subfamily. Component of the spliceosome. Interacts with AFC2, U2AF35A, U2AF35B, RNU1, SCL33 and SKIP. The interaction with AFC2 depends on phosphorylation status. Interaction with RNU1 defines initial 5' splice sites and interaction with U2AF35B 3' splice sites in the early stage of spliceosome assembly. Post-translationally, phosphorylated by AFC2. The phosphorylation status regulates intranuclear distribution. As to expression, especially present in actively growing regions and dividing cells. Mostly expressed in roots (primary and secondary root meristem), shoot apical meristem (SAM), leaf primordia, pollen and inflorescence, and, to a lower extent, in leaves, vascular tissue, hydathode and fruits.

Its subcellular location is the nucleus speckle. It is found in the nucleus. The protein localises to the nucleoplasm. Involved in 5' and 3' splicing site selection of introns, and may bridge the 5' and 3' components of the spliceosome. Isoform 1 is required during flower petal development and isoform 2 is involved in root growth. Negatively regulates glucose and abscisic acid (ABA) signaling during early seedling development. Involved in the RNA-directed DNA methylation pathway. Modulates KIN10 stability in response to sugars, probably through the splicing regulation of 5PTASE13, a protein implicated in the proteasomal degradation of KIN10. The sequence is that of Serine/arginine-rich splicing factor SR45 from Arabidopsis thaliana (Mouse-ear cress).